Reading from the N-terminus, the 621-residue chain is Pre-mRNA-processing protein 45 (621 aa).

Disordered regions lie at residues 1 to 73, 137 to 164, 220 to 251, 347 to 438, and 542 to 621; these read MSAT…YANG, SQRT…SNTE, AQRD…RSPP, RARE…ELRM, and GKND…EHDS. Residues 36-51 are compositionally biased toward low complexity; the sequence is PSTSSSSSALVSTSSP. 2 stretches are compositionally biased toward basic and acidic residues: residues 140–164 and 220–229; these read TDIK…SNTE and AQRDPLEPPR. Positions 239–248 are enriched in pro residues; sequence PPSPPPPVLR. Residues 364–380 are compositionally biased toward basic and acidic residues; it reads GRDDDVASRLADSDARP. The span at 403–417 shows a compositional bias: acidic residues; sequence DSDESAASDEEDDEG. 2 stretches are compositionally biased toward basic and acidic residues: residues 418 to 437 and 594 to 621; these read ARER…RELR and EDAK…EHDS.

This sequence belongs to the SNW family. As to quaternary structure, associated with the spliceosome.

It is found in the nucleus. Functionally, involved in pre-mRNA splicing. This Mycosarcoma maydis (Corn smut fungus) protein is Pre-mRNA-processing protein 45 (PRP45).